Reading from the N-terminus, the 266-residue chain is Type II pantothenate kinase (266 aa).

Residue 6–13 (DAGGTLIK) participates in ATP binding. E70 functions as the Proton acceptor in the catalytic mechanism. Residues T99, 121 to 125 (GGMIQ), Y137, and S225 each bind ATP.

It belongs to the type II pantothenate kinase family. In terms of assembly, homodimer.

It localises to the cytoplasm. It catalyses the reaction (R)-pantothenate + ATP = (R)-4'-phosphopantothenate + ADP + H(+). It participates in cofactor biosynthesis; coenzyme A biosynthesis; CoA from (R)-pantothenate: step 1/5. Catalyzes the phosphorylation of pantothenate (Pan), the first step in CoA biosynthesis. This Staphylococcus haemolyticus (strain JCSC1435) protein is Type II pantothenate kinase.